We begin with the raw amino-acid sequence, 66 residues long: MDWLAKYWWILVLVFLVGVLINVIKDLKRVDHKKFLANKPELPPHRDFNDKWDDDDDWPKKDQPKK.

Residues L4–I24 form a helical membrane-spanning segment. The tract at residues K39–K66 is disordered. Positions L42 to K51 are enriched in basic and acidic residues.

This sequence belongs to the UPF0370 family.

It localises to the cell membrane. This Citrobacter koseri (strain ATCC BAA-895 / CDC 4225-83 / SGSC4696) protein is UPF0370 protein CKO_00315.